The following is a 261-amino-acid chain: Ribosomal RNA small subunit methyltransferase A (261 aa).

6 residues coordinate S-adenosyl-L-methionine: N15, I17, G42, E64, D90, and N109.

It belongs to the class I-like SAM-binding methyltransferase superfamily. rRNA adenine N(6)-methyltransferase family. RsmA subfamily.

It is found in the cytoplasm. It carries out the reaction adenosine(1518)/adenosine(1519) in 16S rRNA + 4 S-adenosyl-L-methionine = N(6)-dimethyladenosine(1518)/N(6)-dimethyladenosine(1519) in 16S rRNA + 4 S-adenosyl-L-homocysteine + 4 H(+). In terms of biological role, specifically dimethylates two adjacent adenosines (A1518 and A1519) in the loop of a conserved hairpin near the 3'-end of 16S rRNA in the 30S particle. May play a critical role in biogenesis of 30S subunits. The sequence is that of Ribosomal RNA small subunit methyltransferase A from Wolbachia sp. subsp. Brugia malayi (strain TRS).